The following is an 87-amino-acid chain: Small ribosomal subunit protein bS20 (87 aa).

It belongs to the bacterial ribosomal protein bS20 family.

Binds directly to 16S ribosomal RNA. The polypeptide is Small ribosomal subunit protein bS20 (Clostridium botulinum (strain Eklund 17B / Type B)).